A 274-amino-acid polypeptide reads, in one-letter code: Formamidopyrimidine-DNA glycosylase (274 aa).

The active-site Schiff-base intermediate with DNA is Pro-2. Catalysis depends on Glu-3, which acts as the Proton donor. Catalysis depends on Lys-58, which acts as the Proton donor; for beta-elimination activity. His-92 and Arg-111 together coordinate DNA. The segment at 239–273 adopts an FPG-type; degenerate zinc-finger fold; the sequence is HVYGREGEPCERCGTIIEKIKVAQRGTHFCPLEQR. Arg-263 (proton donor; for delta-elimination activity) is an active-site residue.

This sequence belongs to the FPG family. In terms of assembly, monomer. It depends on Zn(2+) as a cofactor.

The enzyme catalyses Hydrolysis of DNA containing ring-opened 7-methylguanine residues, releasing 2,6-diamino-4-hydroxy-5-(N-methyl)formamidopyrimidine.. It catalyses the reaction 2'-deoxyribonucleotide-(2'-deoxyribose 5'-phosphate)-2'-deoxyribonucleotide-DNA = a 3'-end 2'-deoxyribonucleotide-(2,3-dehydro-2,3-deoxyribose 5'-phosphate)-DNA + a 5'-end 5'-phospho-2'-deoxyribonucleoside-DNA + H(+). Its function is as follows. Involved in base excision repair of DNA damaged by oxidation or by mutagenic agents. Acts as a DNA glycosylase that recognizes and removes damaged bases. Has a preference for oxidized purines, such as 7,8-dihydro-8-oxoguanine (8-oxoG). Has AP (apurinic/apyrimidinic) lyase activity and introduces nicks in the DNA strand. Cleaves the DNA backbone by beta-delta elimination to generate a single-strand break at the site of the removed base with both 3'- and 5'-phosphates. In Lactiplantibacillus plantarum (strain ATCC BAA-793 / NCIMB 8826 / WCFS1) (Lactobacillus plantarum), this protein is Formamidopyrimidine-DNA glycosylase.